The chain runs to 483 residues: Regulatory protein ViaA (483 aa).

Belongs to the ViaA family. Homodimer. Interacts with RavA.

It localises to the cytoplasm. Its function is as follows. Component of the RavA-ViaA chaperone complex, which may act on the membrane to optimize the function of some of the respiratory chains. ViaA stimulates the ATPase activity of RavA. The chain is Regulatory protein ViaA from Escherichia coli O139:H28 (strain E24377A / ETEC).